The sequence spans 408 residues: Interferon-activable protein 203 (408 aa).

The Pyrin domain occupies 1–87 (MAEYKNIVLL…AKKLKTEKAK (87 aa)). The disordered stretch occupies residues 84–208 (EKAKVQEKKK…EGHHQGPKQV (125 aa)). The segment covering 92-102 (KKGKCKTAGKK) has biased composition (basic residues). Polar residues predominate over residues 150–159 (AQLPETSGTN). The HIN-200 domain maps to 190 to 388 (TVPKEPSREE…SVRHSYMQVI (199 aa)).

The protein belongs to the HIN-200 family. Constitutively expressed in the thymus, bone marrow and spleen. Isoform 1 and isoform 3 are present in liver (at protein level).

The protein resides in the nucleus. This chain is Interferon-activable protein 203 (Ifi203), found in Mus musculus (Mouse).